The sequence spans 62 residues: Protein DsrB (62 aa).

The protein belongs to the DsrB family.

In Citrobacter koseri (strain ATCC BAA-895 / CDC 4225-83 / SGSC4696), this protein is Protein DsrB.